Here is a 1144-residue protein sequence, read N- to C-terminus: PAN2-PAN3 deadenylation complex catalytic subunit PAN2 (1144 aa).

4 WD repeats span residues 27–66 (KKEK…YTRH), 153–193 (SSTY…VIHS), 196–233 (GHSA…NVYD), and 302–341 (HPCK…SGFT). Residues 344–481 (AAVLEYQDYP…LLEYKPSNNI (138 aa)) are linker. The USP domain maps to 482 to 887 (DIPPAYSKLQ…TPEIVVYSDA (406 aa)). The Exonuclease domain maps to 939-1110 (VALDAEFVSL…EDAHTALLLY (172 aa)). 4 residues coordinate a divalent metal cation: Asp942, Glu944, Asp1051, and Asp1102.

This sequence belongs to the peptidase C19 family. PAN2 subfamily. Forms a heterotrimer with an asymmetric homodimer of the regulatory subunit PAN3 to form the poly(A)-nuclease (PAN) deadenylation complex. Requires a divalent metal cation as cofactor.

It is found in the cytoplasm. It catalyses the reaction Exonucleolytic cleavage of poly(A) to 5'-AMP.. Its activity is regulated as follows. Positively regulated by the regulatory subunit PAN3. In terms of biological role, catalytic subunit of the poly(A)-nuclease (PAN) deadenylation complex, one of two cytoplasmic mRNA deadenylases involved in mRNA turnover. PAN specifically shortens poly(A) tails of RNA and the activity is stimulated by poly(A)-binding protein PAB1. PAN deadenylation is followed by rapid degradation of the shortened mRNA tails by the CCR4-NOT complex. Deadenylated mRNAs are then degraded by two alternative mechanisms, namely exosome-mediated 3'-5' exonucleolytic degradation, or deadenylation-dependent mRNA decaping and subsequent 5'-3' exonucleolytic degradation by XRN1. May also be involved in post-transcriptional maturation of mRNA poly(A) tails. The sequence is that of PAN2-PAN3 deadenylation complex catalytic subunit PAN2 from Kluyveromyces lactis (strain ATCC 8585 / CBS 2359 / DSM 70799 / NBRC 1267 / NRRL Y-1140 / WM37) (Yeast).